Consider the following 249-residue polypeptide: DNA repair protein RecO (249 aa).

This sequence belongs to the RecO family.

Involved in DNA repair and RecF pathway recombination. The protein is DNA repair protein RecO of Exiguobacterium sibiricum (strain DSM 17290 / CCUG 55495 / CIP 109462 / JCM 13490 / 255-15).